Here is a 47-residue protein sequence, read N- to C-terminus: Wound-induced basic protein (47 aa).

The interval 1 to 47 (MIYDVNSPLFRSFLSQKGGSSDKRKTEEQKPKEHRPKASENKPIMTE) is disordered. The span at 20–40 (SSDKRKTEEQKPKEHRPKASE) shows a compositional bias: basic and acidic residues.

In terms of tissue distribution, abundant in radicals and epicotyls of seedlings and higher in the roots than in stems and leaves of mature plants.

The sequence is that of Wound-induced basic protein (PR4) from Phaseolus vulgaris (Kidney bean).